Reading from the N-terminus, the 115-residue chain is Large ribosomal subunit protein bL21 (115 aa).

Belongs to the bacterial ribosomal protein bL21 family. In terms of assembly, part of the 50S ribosomal subunit. Contacts protein L20.

Its function is as follows. This protein binds to 23S rRNA in the presence of protein L20. This is Large ribosomal subunit protein bL21 from Coxiella burnetii (strain Dugway 5J108-111).